We begin with the raw amino-acid sequence, 124 residues long: Small ribosomal subunit protein uS12 (124 aa).

The segment at 1 to 24 (MPTINQLVRQGRKKSVKKTNTPAL) is disordered. A 3-methylthioaspartic acid modification is found at Asp89.

This sequence belongs to the universal ribosomal protein uS12 family. As to quaternary structure, part of the 30S ribosomal subunit. Contacts proteins S8 and S17. May interact with IF1 in the 30S initiation complex.

Its function is as follows. With S4 and S5 plays an important role in translational accuracy. Interacts with and stabilizes bases of the 16S rRNA that are involved in tRNA selection in the A site and with the mRNA backbone. Located at the interface of the 30S and 50S subunits, it traverses the body of the 30S subunit contacting proteins on the other side and probably holding the rRNA structure together. The combined cluster of proteins S8, S12 and S17 appears to hold together the shoulder and platform of the 30S subunit. In Desulfotalea psychrophila (strain LSv54 / DSM 12343), this protein is Small ribosomal subunit protein uS12.